The primary structure comprises 73 residues: Cell division protein ZapB (73 aa).

Residues Leu-3 to Val-66 are a coiled coil.

It belongs to the ZapB family. Homodimer. The ends of the coiled-coil dimer bind to each other, forming polymers. Interacts with FtsZ.

It is found in the cytoplasm. Its function is as follows. Non-essential, abundant cell division factor that is required for proper Z-ring formation. It is recruited early to the divisome by direct interaction with FtsZ, stimulating Z-ring assembly and thereby promoting cell division earlier in the cell cycle. Its recruitment to the Z-ring requires functional FtsA or ZipA. The sequence is that of Cell division protein ZapB from Shewanella baltica (strain OS223).